The primary structure comprises 39 residues: Large ribosomal subunit protein bL36 (39 aa).

Belongs to the bacterial ribosomal protein bL36 family.

This Leuconostoc mesenteroides subsp. mesenteroides (strain ATCC 8293 / DSM 20343 / BCRC 11652 / CCM 1803 / JCM 6124 / NCDO 523 / NBRC 100496 / NCIMB 8023 / NCTC 12954 / NRRL B-1118 / 37Y) protein is Large ribosomal subunit protein bL36.